The sequence spans 101 residues: Large ribosomal subunit protein bL21 (101 aa).

Belongs to the bacterial ribosomal protein bL21 family. In terms of assembly, part of the 50S ribosomal subunit. Contacts protein L20.

Its function is as follows. This protein binds to 23S rRNA in the presence of protein L20. In Anaeromyxobacter dehalogenans (strain 2CP-1 / ATCC BAA-258), this protein is Large ribosomal subunit protein bL21.